We begin with the raw amino-acid sequence, 280 residues long: MAAVVAVSLKRWFPATTLGGACLQACRGAQTAAATAPRIKKFAIYRWDPDKTGDKPHMQTYEIDLNNCGPMVLDALIKIKNEIDSTLTFRRSCREGICGSCAMNINGGNTLACTRRIDTNLDKVSKIYPLPHMYVIKDLVPDLSNFYAQYKSIEPYLKKKDESQEGKQQYLQSIEEREKLDGLYECILCACCSTSCPSYWWNGDKYLGPAVLMQAYRWMIDSRDDFTEERLAKLQDPFSLYRCHTIMNCTGTCPKGLNPGKAIAEIKKMMATYKEKKASA.

The N-terminal 28 residues, 1–28, are a transit peptide targeting the mitochondrion; sequence MAAVVAVSLKRWFPATTLGGACLQACRG. In terms of domain architecture, 2Fe-2S ferredoxin-type spans 40 to 131; that stretch reads KKFAIYRWDP…DKVSKIYPLP (92 aa). 2 positions are modified to N6-acetyllysine: Lys51 and Lys55. Residues Cys93, Cys98, Cys101, and Cys113 each contribute to the [2Fe-2S] cluster site. Residues 146 to 218 are interaction with SDHAF1; it reads FYAQYKSIEP…PAVLMQAYRW (73 aa). In terms of domain architecture, 4Fe-4S ferredoxin-type spans 176–206; it reads EREKLDGLYECILCACCSTSCPSYWWNGDKY. [4Fe-4S] cluster-binding residues include Cys186, Cys189, and Cys192. Residue Cys196 coordinates [3Fe-4S] cluster. Trp201 contributes to the a ubiquinone binding site. The [3Fe-4S] cluster site is built by Cys243 and Cys249. A [4Fe-4S] cluster-binding site is contributed by Cys253.

Belongs to the succinate dehydrogenase/fumarate reductase iron-sulfur protein family. Component of complex II composed of four subunits: the flavoprotein (FP) SDHA, iron-sulfur protein (IP) SDHB, and a cytochrome b560 composed of SDHC and SDHD. Interacts with SDHAF1; the interaction is required for iron-sulfur cluster incorporation into SDHB. It depends on [2Fe-2S] cluster as a cofactor. The cofactor is [3Fe-4S] cluster. [4Fe-4S] cluster is required as a cofactor.

Its subcellular location is the mitochondrion inner membrane. It catalyses the reaction a quinone + succinate = fumarate + a quinol. The enzyme catalyses (R)-malate + a quinone = enol-oxaloacetate + a quinol. It carries out the reaction (S)-malate + a quinone = enol-oxaloacetate + a quinol. It functions in the pathway carbohydrate metabolism; tricarboxylic acid cycle; fumarate from succinate (eukaryal route): step 1/1. With respect to regulation, enol-oxaloacetate inhibits the succinate dehydrogenase activity. Iron-sulfur protein (IP) subunit of the succinate dehydrogenase complex (mitochondrial respiratory chain complex II), responsible for transferring electrons from succinate to ubiquinone (coenzyme Q). SDH also oxidizes malate to the non-canonical enol form of oxaloacetate, enol-oxaloacetate. Enol-oxaloacetate, which is a potent inhibitor of the succinate dehydrogenase activity, is further isomerized into keto-oxaloacetate. This Sus scrofa (Pig) protein is Succinate dehydrogenase [ubiquinone] iron-sulfur subunit, mitochondrial (SDHB).